Here is a 150-residue protein sequence, read N- to C-terminus: Aspartate 1-decarboxylase (150 aa).

Catalysis depends on serine 25, which acts as the Schiff-base intermediate with substrate; via pyruvic acid. Serine 25 carries the post-translational modification Pyruvic acid (Ser). Substrate is bound at residue threonine 57. Tyrosine 58 functions as the Proton donor in the catalytic mechanism. 73–75 (GAA) contacts substrate.

It belongs to the PanD family. As to quaternary structure, heterooctamer of four alpha and four beta subunits. Requires pyruvate as cofactor. In terms of processing, is synthesized initially as an inactive proenzyme, which is activated by self-cleavage at a specific serine bond to produce a beta-subunit with a hydroxyl group at its C-terminus and an alpha-subunit with a pyruvoyl group at its N-terminus.

It localises to the cytoplasm. The enzyme catalyses L-aspartate + H(+) = beta-alanine + CO2. Its pathway is cofactor biosynthesis; (R)-pantothenate biosynthesis; beta-alanine from L-aspartate: step 1/1. Catalyzes the pyruvoyl-dependent decarboxylation of aspartate to produce beta-alanine. The protein is Aspartate 1-decarboxylase of Kocuria rhizophila (strain ATCC 9341 / DSM 348 / NBRC 103217 / DC2201).